The primary structure comprises 177 residues: Large ribosomal subunit protein uL6 (177 aa).

The protein belongs to the universal ribosomal protein uL6 family. Part of the 50S ribosomal subunit.

In terms of biological role, this protein binds to the 23S rRNA, and is important in its secondary structure. It is located near the subunit interface in the base of the L7/L12 stalk, and near the tRNA binding site of the peptidyltransferase center. The protein is Large ribosomal subunit protein uL6 of Vibrio parahaemolyticus serotype O3:K6 (strain RIMD 2210633).